The primary structure comprises 1070 residues: Isoleucine--tRNA ligase (1070 aa).

The 'HIGH' region motif lies at 50-60 (PYTSGAAHMGT). The 'KMSKS' region motif lies at 606-610 (GMSKS). Lysine 609 provides a ligand contact to ATP.

The protein belongs to the class-I aminoacyl-tRNA synthetase family. IleS type 2 subfamily. In terms of assembly, monomer. Zn(2+) serves as cofactor.

The protein resides in the cytoplasm. The enzyme catalyses tRNA(Ile) + L-isoleucine + ATP = L-isoleucyl-tRNA(Ile) + AMP + diphosphate. Catalyzes the attachment of isoleucine to tRNA(Ile). As IleRS can inadvertently accommodate and process structurally similar amino acids such as valine, to avoid such errors it has two additional distinct tRNA(Ile)-dependent editing activities. One activity is designated as 'pretransfer' editing and involves the hydrolysis of activated Val-AMP. The other activity is designated 'posttransfer' editing and involves deacylation of mischarged Val-tRNA(Ile). This chain is Isoleucine--tRNA ligase, found in Halobacterium salinarum (strain ATCC 700922 / JCM 11081 / NRC-1) (Halobacterium halobium).